A 690-amino-acid polypeptide reads, in one-letter code: Proprotein convertase subtilisin/kexin type 9 (690 aa).

Residues 1 to 28 (MGTVRSRRLWWPLPLLLLLLRGPAGARA) form the signal peptide. Positions 29–150 (QEDDDGDYEE…IEEDSYVFAQ (122 aa)) are excised as a propeptide. Sulfotyrosine is present on Tyr-36. Ser-45 is subject to Phosphoserine. The Inhibitor I9 domain occupies 75 to 147 (TYVVVLKEET…VDYIEEDSYV (73 aa)). The region spanning 153 to 459 (PWNLERITPA…GWQLFCRTVW (307 aa)) is the Peptidase S8 domain. Catalysis depends on charge relay system residues Asp-184 and His-224. Intrachain disulfides connect Cys-221–Cys-253 and Cys-321–Cys-356. Residue Ser-384 is the Charge relay system of the active site. The tract at residues 448–690 (GAGWQLFCRT…HLAQASQELQ (243 aa)) is C-terminal domain. 3 cysteine pairs are disulfide-bonded: Cys-455–Cys-525, Cys-475–Cys-524, and Cys-484–Cys-507. N-linked (GlcNAc...) asparagine glycosylation is present at Asn-531. 6 cysteine pairs are disulfide-bonded: Cys-532–Cys-599, Cys-550–Cys-598, Cys-560–Cys-586, Cys-606–Cys-677, Cys-624–Cys-676, and Cys-633–Cys-652. Ser-686 carries the phosphoserine modification.

The protein belongs to the peptidase S8 family. Monomer. Can self-associate to form dimers and higher multimers which may have increased LDLR degrading activity. The precursor protein but not the mature protein may form multimers. Interacts with APOB, VLDLR, LRP8/APOER2 and BACE1. The full-length immature form (pro-PCSK9) interacts with SCNN1A, SCNN1B and SCNN1G. The pro-PCSK9 form (via C-terminal domain) interacts with LDLR. Interacts (via the C-terminal domain) with ANXA2 (via repeat Annexin 1); the interaction inhibits the degradation of LDLR. It depends on Ca(2+) as a cofactor. Post-translationally, cleavage by furin and PCSK5 generates a truncated inactive protein that is unable to induce LDLR degradation. In terms of processing, undergoes autocatalytic cleavage in the endoplasmic reticulum to release the propeptide from the N-terminus and the cleavage of the propeptide is strictly required for its maturation and activation. The cleaved propeptide however remains associated with the catalytic domain through non-covalent interactions, preventing potential substrates from accessing its active site. As a result, it is secreted from cells as a propeptide-containing, enzymatically inactive protein. Phosphorylation protects the propeptide against proteolysis.

It localises to the cytoplasm. The protein resides in the secreted. Its subcellular location is the endosome. It is found in the lysosome. The protein localises to the cell surface. It localises to the endoplasmic reticulum. The protein resides in the golgi apparatus. Its activity is regulated as follows. Its proteolytic activity is autoinhibited by the non-covalent binding of the propeptide to the catalytic domain. Inhibited by EGTA. Its function is as follows. Crucial player in the regulation of plasma cholesterol homeostasis. Binds to low-density lipid receptor family members: low density lipoprotein receptor (LDLR), very low density lipoprotein receptor (VLDLR), apolipoprotein E receptor (LRP1/APOER) and apolipoprotein receptor 2 (LRP8/APOER2), and promotes their degradation in intracellular acidic compartments. Acts via a non-proteolytic mechanism to enhance the degradation of the hepatic LDLR through a clathrin LDLRAP1/ARH-mediated pathway. May prevent the recycling of LDLR from endosomes to the cell surface or direct it to lysosomes for degradation. Can induce ubiquitination of LDLR leading to its subsequent degradation. Inhibits intracellular degradation of APOB via the autophagosome/lysosome pathway in a LDLR-independent manner. Involved in the disposal of non-acetylated intermediates of BACE1 in the early secretory pathway. Inhibits epithelial Na(+) channel (ENaC)-mediated Na(+) absorption by reducing ENaC surface expression primarily by increasing its proteasomal degradation. Regulates neuronal apoptosis via modulation of LRP8/APOER2 levels and related anti-apoptotic signaling pathways. In Ateles geoffroyi (Black-handed spider monkey), this protein is Proprotein convertase subtilisin/kexin type 9 (PCSK9).